A 204-amino-acid polypeptide reads, in one-letter code: Molybdenum cofactor guanylyltransferase (204 aa).

GTP is bound by residues 10–12 (LAG), Lys23, Asn51, Asp69, and Asp99. Asp99 provides a ligand contact to Mg(2+).

This sequence belongs to the MobA family. In terms of assembly, monomer. Requires Mg(2+) as cofactor.

It localises to the cytoplasm. The catalysed reaction is Mo-molybdopterin + GTP + H(+) = Mo-molybdopterin guanine dinucleotide + diphosphate. In terms of biological role, transfers a GMP moiety from GTP to Mo-molybdopterin (Mo-MPT) cofactor (Moco or molybdenum cofactor) to form Mo-molybdopterin guanine dinucleotide (Mo-MGD) cofactor. The chain is Molybdenum cofactor guanylyltransferase from Shewanella piezotolerans (strain WP3 / JCM 13877).